The following is a 339-amino-acid chain: Glycerol-3-phosphate dehydrogenase [NAD(P)+] (339 aa).

NADPH contacts are provided by serine 11, tryptophan 12, and lysine 109. Residues lysine 109, glycine 140, and serine 142 each coordinate sn-glycerol 3-phosphate. Alanine 144 is an NADPH binding site. Sn-glycerol 3-phosphate contacts are provided by lysine 195, aspartate 249, serine 259, arginine 260, and asparagine 261. The active-site Proton acceptor is the lysine 195. Arginine 260 is an NADPH binding site. Positions 284 and 286 each coordinate NADPH.

It belongs to the NAD-dependent glycerol-3-phosphate dehydrogenase family.

It localises to the cytoplasm. It catalyses the reaction sn-glycerol 3-phosphate + NAD(+) = dihydroxyacetone phosphate + NADH + H(+). It carries out the reaction sn-glycerol 3-phosphate + NADP(+) = dihydroxyacetone phosphate + NADPH + H(+). It functions in the pathway membrane lipid metabolism; glycerophospholipid metabolism. Its function is as follows. Catalyzes the reduction of the glycolytic intermediate dihydroxyacetone phosphate (DHAP) to sn-glycerol 3-phosphate (G3P), the key precursor for phospholipid synthesis. This Lactobacillus johnsonii (strain CNCM I-12250 / La1 / NCC 533) protein is Glycerol-3-phosphate dehydrogenase [NAD(P)+].